A 462-amino-acid chain; its full sequence is tRNA-2-methylthio-N(6)-dimethylallyladenosine synthase (462 aa).

Residues 1-116 (MKLFIQTLGC…ITQVLERPKA (116 aa)) enclose the MTTase N-terminal domain. Positions 10, 47, 79, 148, 152, and 155 each coordinate [4Fe-4S] cluster. The region spanning 134-370 (QGMGIKAHLN…NLHKEILSKK (237 aa)) is the Radical SAM core domain. Residues 372–436 (QLEIGRIHNV…GGGLMGRFIN (65 aa)) form the TRAM domain.

Belongs to the methylthiotransferase family. MiaB subfamily. In terms of assembly, monomer. It depends on [4Fe-4S] cluster as a cofactor.

The protein resides in the cytoplasm. It catalyses the reaction N(6)-dimethylallyladenosine(37) in tRNA + (sulfur carrier)-SH + AH2 + 2 S-adenosyl-L-methionine = 2-methylsulfanyl-N(6)-dimethylallyladenosine(37) in tRNA + (sulfur carrier)-H + 5'-deoxyadenosine + L-methionine + A + S-adenosyl-L-homocysteine + 2 H(+). Functionally, catalyzes the methylthiolation of N6-(dimethylallyl)adenosine (i(6)A), leading to the formation of 2-methylthio-N6-(dimethylallyl)adenosine (ms(2)i(6)A) at position 37 in tRNAs that read codons beginning with uridine. The sequence is that of tRNA-2-methylthio-N(6)-dimethylallyladenosine synthase from Helicobacter hepaticus (strain ATCC 51449 / 3B1).